Here is a 146-residue protein sequence, read N- to C-terminus: MAKEFSRTRRIGQQLQQELAVVLQRDMKDPRIGFVTVNDVDVSRDLSYAKVFVTFFEEDKEVVQEKLNALIAAAPYIRTLVAGRMKLRVMPEIRFVYDSSLVEGMRMSNLVSQVINSDKAKQQQFGSADDVTENDIDEADDTEGKA.

A disordered region spans residues 121–146 (KQQQFGSADDVTENDIDEADDTEGKA). A compositionally biased stretch (acidic residues) spans 130 to 146 (DVTENDIDEADDTEGKA).

Belongs to the RbfA family. Monomer. Binds 30S ribosomal subunits, but not 50S ribosomal subunits or 70S ribosomes.

It is found in the cytoplasm. In terms of biological role, one of several proteins that assist in the late maturation steps of the functional core of the 30S ribosomal subunit. Associates with free 30S ribosomal subunits (but not with 30S subunits that are part of 70S ribosomes or polysomes). Required for efficient processing of 16S rRNA. May interact with the 5'-terminal helix region of 16S rRNA. This chain is Ribosome-binding factor A, found in Shewanella sp. (strain MR-4).